Reading from the N-terminus, the 277-residue chain is 4-hydroxy-3-methylbut-2-enyl diphosphate reductase (277 aa).

[4Fe-4S] cluster is bound at residue Cys12. 2 residues coordinate (2E)-4-hydroxy-3-methylbut-2-enyl diphosphate: His36 and His70. Residues His36 and His70 each contribute to the dimethylallyl diphosphate site. His36 and His70 together coordinate isopentenyl diphosphate. Residue Cys92 participates in [4Fe-4S] cluster binding. His120 is a binding site for (2E)-4-hydroxy-3-methylbut-2-enyl diphosphate. Dimethylallyl diphosphate is bound at residue His120. Residue His120 coordinates isopentenyl diphosphate. The Proton donor role is filled by Glu122. Residue Thr158 coordinates (2E)-4-hydroxy-3-methylbut-2-enyl diphosphate. Cys186 contacts [4Fe-4S] cluster. Ser214, Asn216, and Ser258 together coordinate (2E)-4-hydroxy-3-methylbut-2-enyl diphosphate. Positions 214, 216, and 258 each coordinate dimethylallyl diphosphate. Isopentenyl diphosphate-binding residues include Ser214, Asn216, and Ser258.

This sequence belongs to the IspH family. The cofactor is [4Fe-4S] cluster.

The enzyme catalyses isopentenyl diphosphate + 2 oxidized [2Fe-2S]-[ferredoxin] + H2O = (2E)-4-hydroxy-3-methylbut-2-enyl diphosphate + 2 reduced [2Fe-2S]-[ferredoxin] + 2 H(+). The catalysed reaction is dimethylallyl diphosphate + 2 oxidized [2Fe-2S]-[ferredoxin] + H2O = (2E)-4-hydroxy-3-methylbut-2-enyl diphosphate + 2 reduced [2Fe-2S]-[ferredoxin] + 2 H(+). It functions in the pathway isoprenoid biosynthesis; dimethylallyl diphosphate biosynthesis; dimethylallyl diphosphate from (2E)-4-hydroxy-3-methylbutenyl diphosphate: step 1/1. The protein operates within isoprenoid biosynthesis; isopentenyl diphosphate biosynthesis via DXP pathway; isopentenyl diphosphate from 1-deoxy-D-xylulose 5-phosphate: step 6/6. Catalyzes the conversion of 1-hydroxy-2-methyl-2-(E)-butenyl 4-diphosphate (HMBPP) into a mixture of isopentenyl diphosphate (IPP) and dimethylallyl diphosphate (DMAPP). Acts in the terminal step of the DOXP/MEP pathway for isoprenoid precursor biosynthesis. The sequence is that of 4-hydroxy-3-methylbut-2-enyl diphosphate reductase from Campylobacter jejuni subsp. jejuni serotype O:23/36 (strain 81-176).